Consider the following 104-residue polypeptide: Cytochrome c-551 (104 aa).

The first 22 residues, 1–22 (MKKILIPMLALGGALAMQPALA), serve as a signal peptide directing secretion. Residues Cys-34, Cys-37, His-38, and Met-83 each coordinate heme c.

In terms of processing, binds 1 heme c group covalently per subunit.

It is found in the periplasm. In terms of biological role, electron donor for cytochrome cd1 in nitrite and nitrate respiration. This Stutzerimonas stutzeri (Pseudomonas stutzeri) protein is Cytochrome c-551 (nirM).